A 147-amino-acid chain; its full sequence is ATP synthase epsilon chain (147 aa).

This sequence belongs to the ATPase epsilon chain family. As to quaternary structure, F-type ATPases have 2 components, CF(1) - the catalytic core - and CF(0) - the membrane proton channel. CF(1) has five subunits: alpha(3), beta(3), gamma(1), delta(1), epsilon(1). CF(0) has three main subunits: a, b and c.

Its subcellular location is the cell inner membrane. Produces ATP from ADP in the presence of a proton gradient across the membrane. This chain is ATP synthase epsilon chain, found in Protochlamydia amoebophila (strain UWE25).